Here is a 309-residue protein sequence, read N- to C-terminus: Elongation factor Ts (309 aa).

Residues 82–85 form an involved in Mg(2+) ion dislocation from EF-Tu region; sequence TDFV.

This sequence belongs to the EF-Ts family.

It localises to the cytoplasm. Its function is as follows. Associates with the EF-Tu.GDP complex and induces the exchange of GDP to GTP. It remains bound to the aminoacyl-tRNA.EF-Tu.GTP complex up to the GTP hydrolysis stage on the ribosome. This chain is Elongation factor Ts, found in Rickettsia akari (strain Hartford).